The primary structure comprises 324 residues: 4-diphosphocytidyl-2-C-methyl-D-erythritol kinase (324 aa).

Lysine 11 is an active-site residue. Residue proline 108 to threonine 118 participates in ATP binding. Aspartate 150 is an active-site residue.

It belongs to the GHMP kinase family. IspE subfamily.

The enzyme catalyses 4-CDP-2-C-methyl-D-erythritol + ATP = 4-CDP-2-C-methyl-D-erythritol 2-phosphate + ADP + H(+). It functions in the pathway isoprenoid biosynthesis; isopentenyl diphosphate biosynthesis via DXP pathway; isopentenyl diphosphate from 1-deoxy-D-xylulose 5-phosphate: step 3/6. Catalyzes the phosphorylation of the position 2 hydroxy group of 4-diphosphocytidyl-2C-methyl-D-erythritol. This Cyanothece sp. (strain PCC 7425 / ATCC 29141) protein is 4-diphosphocytidyl-2-C-methyl-D-erythritol kinase.